Reading from the N-terminus, the 427-residue chain is UBX domain-containing protein 2 (427 aa).

2 disordered regions span residues 115 to 143 (FDQS…SRAS) and 273 to 331 (ETSG…GVAD). Over residues 311 to 326 (STTESQGESSSQQAES) the composition is skewed to low complexity. Positions 349–425 (PGPNVTRIQI…GIQNTALQFE (77 aa)) constitute a UBX domain. Residue Ser-371 is modified to Phosphoserine.

In terms of assembly, interacts with cdc48.

In terms of biological role, involved in CDC48-dependent protein degradation through the ubiquitin/proteasome pathway. This is UBX domain-containing protein 2 (ubx2) from Schizosaccharomyces pombe (strain 972 / ATCC 24843) (Fission yeast).